The chain runs to 262 residues: Abhydrolase domain-containing protein AFT2-1 (262 aa).

The Peroxisomal targeting signal type 1 signature appears at 260–262 (SKL).

Belongs to the AB hydrolase superfamily. AKT2 hydrolase family.

It is found in the peroxisome. Its pathway is mycotoxin biosynthesis. Abhydrolase domain-containing protein; part of the gene clusters that mediate the biosynthesis of the host-selective toxins (HSTs) AF-toxins responsible for Alternaria black spot of strawberry disease by the strawberry pathotype. AF-toxin I and III are valine derivatives of 2,3-dyhydroxy-isovaleric acid and 2-hydroxy-isovaleric acid respectively, while AF II is an isoleucine derivative of 2-hydroxy-valeric acid. These derivatives are bound to a 9,10-epoxy-8-hydroxy-9-methyl-decatrienoic acid (EDA) moiety. On cellular level, AF-toxins affect plasma membrane of susceptible cells and cause a sudden increase in loss of K(+) after a few minutes of toxin treatment. The aldo-keto reductase AFTS1 catalyzes the conversion of 2-keto-isovaleric acid (2-KIV) to 2-hydroxy-isovaleric acid (2-HIV) by reduction of its ketone to an alcohol. The acyl-CoA ligase AFT1, the hydrolase AFT2 and the enoyl-CoA hydratases AFT3 and AFT6, but also the polyketide synthase AFT9, the acyl-CoA dehydrogenase AFT10, the cytochrome P450 monooxygenase AFT11 and the oxidoreductase AFT12 are all involved in the biosynthesis of the AK-, AF- and ACT-toxin common EDA structural moiety. The exact function of each enzyme, and of additional enzymes identified within the AF-toxin clusters have still to be determined. This is Abhydrolase domain-containing protein AFT2-1 from Alternaria alternata (Alternaria rot fungus).